Reading from the N-terminus, the 448-residue chain is Gametocyte surface protein P45/48 (448 aa).

A signal peptide spans 1-27; it reads MMLYISAKKAQVAFILYIVLVLRIISG. The 6-Cys 1 domain occupies 45 to 182; sequence IGYKCNFSNE…AMVHVRVLKY (138 aa). Disulfide bonds link Cys49/Cys71 and Cys102/Cys156. Residues Asn50, Asn131, Asn190, Asn204, Asn254, Asn299, and Asn303 are each glycosylated (N-linked (GlcNAc...) asparagine). Residues 294–426 enclose the 6-Cys 2 domain; it reads VIHGCNFSSN…KSAYMTVTID (133 aa). 3 disulfide bridges follow: Cys298–Cys327, Cys344–Cys412, and Cys352–Cys410. Residue Asp426 is the site of GPI-anchor amidated aspartate attachment. A propeptide spans 427–448 (removed in mature form); sequence SAYYGFLAKTFIFLIVAILLYI.

Heterodimer; heterodimerizes with PF230.

Its subcellular location is the cell surface. The protein localises to the cell membrane. Its function is as follows. Gametocyte surface protein required for male fertility. The polypeptide is Gametocyte surface protein P45/48 (PF45/48) (Plasmodium falciparum (isolate 3D7)).